A 286-amino-acid chain; its full sequence is ATP synthase gamma chain (286 aa).

The protein belongs to the ATPase gamma chain family. As to quaternary structure, F-type ATPases have 2 components, CF(1) - the catalytic core - and CF(0) - the membrane proton channel. CF(1) has five subunits: alpha(3), beta(3), gamma(1), delta(1), epsilon(1). CF(0) has three main subunits: a, b and c.

The protein localises to the cell inner membrane. Produces ATP from ADP in the presence of a proton gradient across the membrane. The gamma chain is believed to be important in regulating ATPase activity and the flow of protons through the CF(0) complex. The sequence is that of ATP synthase gamma chain from Shewanella frigidimarina (strain NCIMB 400).